The sequence spans 355 residues: Histidinol-phosphate aminotransferase (355 aa).

K214 carries the N6-(pyridoxal phosphate)lysine modification.

This sequence belongs to the class-II pyridoxal-phosphate-dependent aminotransferase family. Histidinol-phosphate aminotransferase subfamily. In terms of assembly, homodimer. Requires pyridoxal 5'-phosphate as cofactor.

The catalysed reaction is L-histidinol phosphate + 2-oxoglutarate = 3-(imidazol-4-yl)-2-oxopropyl phosphate + L-glutamate. It functions in the pathway amino-acid biosynthesis; L-histidine biosynthesis; L-histidine from 5-phospho-alpha-D-ribose 1-diphosphate: step 7/9. The sequence is that of Histidinol-phosphate aminotransferase (hisC) from Buchnera aphidicola subsp. Schizaphis graminum (strain Sg).